Reading from the N-terminus, the 296-residue chain is Polyamine aminopropyltransferase (296 aa).

One can recognise a PABS domain in the interval 5–238 (ELWYETLHAN…GIMTFAWATQ (234 aa)). Gln33 contributes to the S-methyl-5'-thioadenosine binding site. Positions 64 and 88 each coordinate spermidine. S-methyl-5'-thioadenosine is bound by residues Glu108 and 140-141 (DG). Residue Asp158 is the Proton acceptor of the active site. 158–161 (DCTD) is a binding site for spermidine. Pro165 serves as a coordination point for S-methyl-5'-thioadenosine.

The protein belongs to the spermidine/spermine synthase family. As to quaternary structure, homodimer or homotetramer.

It localises to the cytoplasm. It catalyses the reaction S-adenosyl 3-(methylsulfanyl)propylamine + putrescine = S-methyl-5'-thioadenosine + spermidine + H(+). Its pathway is amine and polyamine biosynthesis; spermidine biosynthesis; spermidine from putrescine: step 1/1. Its function is as follows. Catalyzes the irreversible transfer of a propylamine group from the amino donor S-adenosylmethioninamine (decarboxy-AdoMet) to putrescine (1,4-diaminobutane) to yield spermidine. In Yersinia pestis bv. Antiqua (strain Antiqua), this protein is Polyamine aminopropyltransferase.